Reading from the N-terminus, the 273-residue chain is Large ribosomal subunit protein uL2 (273 aa).

Residues 221 to 273 (RGTAMNPVDHPHGGGEGRNFGKHPVSPWGVQTKGKKTRHNKRTDKYIVRRRGK) form a disordered region. Residues 253–273 (KGKKTRHNKRTDKYIVRRRGK) show a composition bias toward basic residues.

This sequence belongs to the universal ribosomal protein uL2 family. Part of the 50S ribosomal subunit. Forms a bridge to the 30S subunit in the 70S ribosome.

One of the primary rRNA binding proteins. Required for association of the 30S and 50S subunits to form the 70S ribosome, for tRNA binding and peptide bond formation. It has been suggested to have peptidyltransferase activity; this is somewhat controversial. Makes several contacts with the 16S rRNA in the 70S ribosome. This chain is Large ribosomal subunit protein uL2, found in Mannheimia succiniciproducens (strain KCTC 0769BP / MBEL55E).